Here is a 199-residue protein sequence, read N- to C-terminus: Ribonuclease HII (199 aa).

The region spanning 13–199 (GLVAGVDEVG…FAPIAKILCG (187 aa)) is the RNase H type-2 domain. A divalent metal cation contacts are provided by D19, E20, and D110.

Belongs to the RNase HII family. Mn(2+) is required as a cofactor. The cofactor is Mg(2+).

It is found in the cytoplasm. The catalysed reaction is Endonucleolytic cleavage to 5'-phosphomonoester.. In terms of biological role, endonuclease that specifically degrades the RNA of RNA-DNA hybrids. This chain is Ribonuclease HII, found in Jannaschia sp. (strain CCS1).